Here is a 396-residue protein sequence, read N- to C-terminus: Elongation factor Tu (396 aa).

One can recognise a tr-type G domain in the interval 10 to 206; sequence KPHVNVGTIG…ALDTYIPTPE (197 aa). The segment at 19 to 26 is G1; the sequence is GHVDHGKT. Position 19-26 (19-26) interacts with GTP; that stretch reads GHVDHGKT. Threonine 26 contacts Mg(2+). A G2 region spans residues 60–64; it reads GITIN. The interval 81-84 is G3; sequence DCPG. GTP-binding positions include 81–85 and 136–139; these read DCPGH and NKCD. Residues 136–139 are G4; sequence NKCD. The interval 174 to 176 is G5; the sequence is SAK.

The protein belongs to the TRAFAC class translation factor GTPase superfamily. Classic translation factor GTPase family. EF-Tu/EF-1A subfamily. Monomer.

The protein resides in the cytoplasm. It carries out the reaction GTP + H2O = GDP + phosphate + H(+). GTP hydrolase that promotes the GTP-dependent binding of aminoacyl-tRNA to the A-site of ribosomes during protein biosynthesis. The chain is Elongation factor Tu from Burkholderia vietnamiensis (strain G4 / LMG 22486) (Burkholderia cepacia (strain R1808)).